The sequence spans 678 residues: Electrogenic aspartate/glutamate antiporter SLC25A12, mitochondrial (678 aa).

A2 bears the N-acetylalanine mark. A regulatory N-terminal domain region spans residues 2–294; it reads AVKVQTTKRG…TLADIERIAP (293 aa). Residues 2–329 lie on the Mitochondrial intermembrane side of the membrane; sequence AVKVQTTKRG…WLQIAESAYR (328 aa). The Ca(2+) site is built by D65, T67, D69, L71, and E76. EF-hand domains follow at residues 65–76, 86–121, 125–155, and 157–192; these read DQTKDGLISYQE, APDSMFIVAFQLFDKSGNGEVTFENVKEIFGQTIIH, PFNWDCEFIRLHFGHNRKKHLNYTEFTQFLQ, and LQLEHARQAFALKDKSKSGMISGLDFSDIMVTIRSH. Residues 295–310 form a linker loop domain region; the sequence is LAEGALPYNLAELQRQ. Positions 320-612 are carrier domain; it reads WLQIAESAYR…RWFYIDFGGL (293 aa). 3 Solcar repeats span residues 324–416, 424–508, and 516–604; these read AESA…VRDK, VPLP…CKLL, and VGGL…LQRW. Residues 330–347 form a helical membrane-spanning segment; the sequence is FTLGSVAGAVGATAVYPI. Topologically, residues 348 to 390 are mitochondrial matrix; it reads DLVKTRMQNQRGSGSVVGELMYKNSFDCFKKVLRYEGFFGLYR. The chain crosses the membrane as a helical span at residues 391-410; the sequence is GLIPQLIGVAPEKAIKLTVN. Over 411–433 the chain is Mitochondrial intermembrane; it reads DFVRDKFTRRDGSVPLPAEVLAG. The helical transmembrane segment at 434–447 threads the bilayer; sequence GCAGGSQVIFTNPL. Over 448–482 the chain is Mitochondrial matrix; it reads EIVKIRLQVAGEITTGPRVSALNVLRDLGIFGLYK. Residues 483 to 502 form a helical membrane-spanning segment; it reads GAKACFLRDIPFSAIYFPVY. At 503–521 the chain is on the mitochondrial intermembrane side; that stretch reads AHCKLLLADENGHVGGLNL. Residues 522–539 traverse the membrane as a helical segment; it reads LAAGAMAGVPAASLVTPA. The Mitochondrial matrix portion of the chain corresponds to 540–578; the sequence is DVIKTRLQVAARAGQTTYSGVIDCFRKILREEGPSAFWK. Residues 579–598 traverse the membrane as a helical segment; it reads GTAARVFRSSPQFGVTLVTY. The Mitochondrial intermembrane segment spans residues 599 to 678; it reads ELLQRWFYID…QPKAAVAATQ (80 aa). The segment at 613 to 675 is C-terminal domain; it reads KPAGSEPTPK…AVVQPKAAVA (63 aa).

It belongs to the mitochondrial carrier (TC 2.A.29) family. In terms of assembly, homodimer (via N-terminus). Expressed predominantly in the heart and skeletal muscle, weakly in brain and kidney.

It localises to the mitochondrion inner membrane. It catalyses the reaction L-aspartate(in) + L-glutamate(out) + H(+)(out) = L-aspartate(out) + L-glutamate(in) + H(+)(in). The enzyme catalyses 3-sulfino-L-alanine(out) + L-glutamate(in) + H(+)(in) = 3-sulfino-L-alanine(in) + L-glutamate(out) + H(+)(out). It carries out the reaction 3-sulfino-L-alanine(out) + L-aspartate(in) = 3-sulfino-L-alanine(in) + L-aspartate(out). Activated by calcium-binding in the mitochondrial intermembrane space. Inhibited by pyridoxal 5'-phosphate, bathophenathroline, mercurials, diethyl pyrocarbonate and N-ethylmaleimide. Functionally, mitochondrial electrogenic aspartate/glutamate antiporter that favors efflux of aspartate and entry of glutamate and proton within the mitochondria as part of the malate-aspartate shuttle. Also mediates the uptake of L-cysteinesulfinate (3-sulfino-L-alanine) by mitochondria in exchange of L-glutamate and proton. Can also exchange L-cysteinesulfinate with aspartate in their anionic form without any proton translocation. Lacks transport activity towards L-glutamine or gamma-aminobutyric acid (GABA). The sequence is that of Electrogenic aspartate/glutamate antiporter SLC25A12, mitochondrial from Homo sapiens (Human).